A 289-amino-acid polypeptide reads, in one-letter code: Elongation factor Ts (289 aa).

Residues 82–85 are involved in Mg(2+) ion dislocation from EF-Tu; it reads TDFV.

This sequence belongs to the EF-Ts family.

It is found in the cytoplasm. In terms of biological role, associates with the EF-Tu.GDP complex and induces the exchange of GDP to GTP. It remains bound to the aminoacyl-tRNA.EF-Tu.GTP complex up to the GTP hydrolysis stage on the ribosome. The polypeptide is Elongation factor Ts (Marinobacter nauticus (strain ATCC 700491 / DSM 11845 / VT8) (Marinobacter aquaeolei)).